Reading from the N-terminus, the 900-residue chain is Translation initiation factor IF-2 (900 aa).

3 stretches are compositionally biased toward basic and acidic residues: residues 119–158 (AAKA…EKQE), 165–191 (ADEK…KADA), and 198–229 (EEAR…DHHV). A disordered region spans residues 119-306 (AAKAEAEAKA…NARSVAPESM (188 aa)). The span at 257–272 (SANAGNNANSNSNAGS) shows a compositional bias: low complexity. The tr-type G domain occupies 400–569 (PRAPVVTIMG…LLESEVLELK (170 aa)). Residues 409–416 (GHVDHGKT) form a G1 region. Position 409–416 (409–416 (GHVDHGKT)) interacts with GTP. The tract at residues 434-438 (GITQH) is G2. The segment at 455 to 458 (DTPG) is G3. GTP contacts are provided by residues 455–459 (DTPGH) and 509–512 (NKID). Residues 509-512 (NKID) form a G4 region. The interval 545–547 (SAK) is G5.

This sequence belongs to the TRAFAC class translation factor GTPase superfamily. Classic translation factor GTPase family. IF-2 subfamily.

The protein localises to the cytoplasm. In terms of biological role, one of the essential components for the initiation of protein synthesis. Protects formylmethionyl-tRNA from spontaneous hydrolysis and promotes its binding to the 30S ribosomal subunits. Also involved in the hydrolysis of GTP during the formation of the 70S ribosomal complex. This chain is Translation initiation factor IF-2, found in Shewanella piezotolerans (strain WP3 / JCM 13877).